Here is a 292-residue protein sequence, read N- to C-terminus: Small ribosomal subunit biogenesis GTPase RsgA (292 aa).

The CP-type G domain maps to 64 to 221; that stretch reads RSELFRPAVA…LVDTPGFSSL (158 aa). Residues 113 to 116 and 164 to 172 contribute to the GTP site; these read NKMD and GPSGVGKST. Positions 245, 250, 252, and 258 each coordinate Zn(2+).

Belongs to the TRAFAC class YlqF/YawG GTPase family. RsgA subfamily. Monomer. Associates with 30S ribosomal subunit, binds 16S rRNA. The cofactor is Zn(2+).

The protein resides in the cytoplasm. Its function is as follows. One of several proteins that assist in the late maturation steps of the functional core of the 30S ribosomal subunit. Helps release RbfA from mature subunits. May play a role in the assembly of ribosomal proteins into the subunit. Circularly permuted GTPase that catalyzes slow GTP hydrolysis, GTPase activity is stimulated by the 30S ribosomal subunit. This Clostridium botulinum (strain ATCC 19397 / Type A) protein is Small ribosomal subunit biogenesis GTPase RsgA.